The chain runs to 132 residues: DNA-entry nuclease inhibitor (132 aa).

In terms of assembly, this protein is a subunit of a 75 kDa protein complex, which governs binding and entry of donor DNA. The complex is a tetramer of two subunits of the DNA-entry nuclease and two subunits of a competence-specific protein. Only the complex is able to bind ds- and ss-DNA.

The protein resides in the cell membrane. In terms of biological role, plays a role in the competence of cells to be transformed. It inhibits the activity of the DNA-entry nuclease. This Bacillus subtilis (strain 168) protein is DNA-entry nuclease inhibitor (nin).